The primary structure comprises 141 residues: MDRFYEVMFIVRPDLAEEEVDKIIASLEQTVTNGGGTIRSTEKMGRRKLAYLVRKFSEGNYILLTVDADGPLVAELERRLRVTEQVIKFITVRMDEEEKRLNKIKAIRASRTKVSDQPAAVEAAEAPAAPAAQEESAPASA.

The disordered stretch occupies residues 110–141 (SRTKVSDQPAAVEAAEAPAAPAAQEESAPASA). Low complexity predominate over residues 117-141 (QPAAVEAAEAPAAPAAQEESAPASA).

Belongs to the bacterial ribosomal protein bS6 family.

Binds together with bS18 to 16S ribosomal RNA. The protein is Small ribosomal subunit protein bS6 of Acidobacterium capsulatum (strain ATCC 51196 / DSM 11244 / BCRC 80197 / JCM 7670 / NBRC 15755 / NCIMB 13165 / 161).